The chain runs to 151 residues: Ribosome maturation factor RimP (151 aa).

This sequence belongs to the RimP family.

It is found in the cytoplasm. In terms of biological role, required for maturation of 30S ribosomal subunits. The polypeptide is Ribosome maturation factor RimP (Shewanella oneidensis (strain ATCC 700550 / JCM 31522 / CIP 106686 / LMG 19005 / NCIMB 14063 / MR-1)).